Consider the following 389-residue polypeptide: MLMDKLTELLKLLQNTESIEINEFRMDVEELELYLMPAVQQAIQKTVEVREAVEALPAEEFNPPIRSYPGEVAQVKLGEGTRKSVYLGGQKALYRFEEPQPNPPVVTFDVFDIPMPGLPRPIREHFSDVMEDPGDWARKAVKEYGANMVTIHLIGTGPKVMDKSPREAAKDIEEVLQAVDVPLVIGGSGDPEKDPLVLEKAAEAAEGERCLLASANLDLDYRKVARAALDHNHAVLSWAITDVNMQKTLNRYLLKEGLKREDIVMDPTTCALGYGIEFSIDVITRTRLAALKGDSDLQMPMSSGTTNAWGSREAWMKKDEWGPTDYRGPLWEIVTGLTMMLSGVDIFMMLHPTSVRLLREIGETFTREYMTAETPDLREWITELDYQEV.

This sequence belongs to the CdhD family. Heterodimer of delta and gamma chains. The ACDS complex is made up of alpha, epsilon, beta, gamma and delta chains with a probable stoichiometry of (alpha(2)epsilon(2))(4)-beta(8)-(gamma(1)delta(1))(8).

In terms of biological role, part of a complex that catalyzes the reversible cleavage of acetyl-CoA, allowing autotrophic growth from CO(2). Probably maintains the overall quaternary structure of the ACDS complex. The polypeptide is Acetyl-CoA decarbonylase/synthase complex subunit delta (Methanothermobacter thermautotrophicus (strain ATCC 29096 / DSM 1053 / JCM 10044 / NBRC 100330 / Delta H) (Methanobacterium thermoautotrophicum)).